Here is a 232-residue protein sequence, read N- to C-terminus: Orotidine 5'-phosphate decarboxylase (232 aa).

Residues Asp11, Lys33, 60–69, Thr120, Arg181, Gln190, Gly210, and Arg211 contribute to the substrate site; that span reads DLKFHDIPNT. Lys62 functions as the Proton donor in the catalytic mechanism.

Belongs to the OMP decarboxylase family. Type 1 subfamily. In terms of assembly, homodimer.

The enzyme catalyses orotidine 5'-phosphate + H(+) = UMP + CO2. Its pathway is pyrimidine metabolism; UMP biosynthesis via de novo pathway; UMP from orotate: step 2/2. Functionally, catalyzes the decarboxylation of orotidine 5'-monophosphate (OMP) to uridine 5'-monophosphate (UMP). This chain is Orotidine 5'-phosphate decarboxylase, found in Vibrio vulnificus (strain YJ016).